A 70-amino-acid polypeptide reads, in one-letter code: Turripeptide OL179 (70 aa).

Positions 1–21 (MMAKQVVVLLALLLLLPIVTA) are cleaved as a signal peptide. Positions 22–32 (SMGDASGRTGR) are excised as a propeptide.

In terms of tissue distribution, expressed by the venom duct.

It localises to the secreted. In terms of biological role, acts as a neurotoxin by inhibiting an ion channel. The protein is Turripeptide OL179 of Iotyrris olangoensis (Sea snail).